A 935-amino-acid chain; its full sequence is Disintegrin and metalloproteinase domain-containing protein 22 (935 aa).

The first 24 residues, 1–24 (MHINGGPLASWICCVIGSIHLAHA), serve as a signal peptide directing secretion. Residues 25-227 (STRPENGGTS…QQTRSQRKKR (203 aa)) constitute a propeptide that is removed on maturation. Residues N167 and N210 are each glycosylated (N-linked (GlcNAc...) asparagine). The Extracellular segment spans residues 228 to 736 (QTRRYPRNVE…NRDEGVISTN (509 aa)). Residues 241 to 440 (KYVELMIVND…GGGACLFNKP (200 aa)) form the Peptidase M12B domain. 17 disulfides stabilise this stretch: C351–C435, C394–C419, C396–C403, C449–C479, C460–C476, C462–C468, C475–C496, C487–C493, C492–C518, C505–C525, C512–C544, C537–C549, C556–C607, C571–C637, C585–C595, C602–C665, and C659–C670. Positions 446–533 (PPECGNGFVE…QCPANIHKLD (88 aa)) constitute a Disintegrin domain. N521 carries an N-linked (GlcNAc...) asparagine glycan. Residues N609 and N636 are each glycosylated (N-linked (GlcNAc...) asparagine). N-linked (GlcNAc...) asparagine glycosylation is present at N677. An EGF-like domain is found at 677–713 (NFSTCLGSTNKICSGHGVCSNEVRCICDRFWTGEDCS). 3 disulfides stabilise this stretch: C681–C695, C689–C701, and C703–C712. The helical transmembrane segment at 737–757 (IIIGAIAGTILVLALVLGITA) threads the bilayer. The Cytoplasmic segment spans residues 758-935 (WGYKNYRRER…QSARLWETSI (178 aa)). A disordered region spans residues 850 to 935 (VSDVCENGRP…QSARLWETSI (86 aa)). Polar residues predominate over residues 859–870 (PRSNSWQGNVTS). The segment covering 871–882 (SRKKLRGKRFRP) has biased composition (basic residues). Positions 891–906 (SPAKSPSSSTGSIASS) are enriched in low complexity.

In terms of processing, the precursor is cleaved by a furin endopeptidase. In terms of tissue distribution, low levels in adult tissues. Not detected in developing embryos.

The protein resides in the cell membrane. Its function is as follows. Probable ligand for integrin in the brain. This is a non catalytic metalloprotease-like protein. This chain is Disintegrin and metalloproteinase domain-containing protein 22 (adam22), found in Xenopus laevis (African clawed frog).